The following is a 198-amino-acid chain: DNA damage response protein D (198 aa).

Residues 124 to 198 (SAAPTDPAGP…SEAGENTPAA (75 aa)) form a disordered region. Over residues 136 to 180 (PGTDRAERTAAERTASERATHDRASTERPARPRRSAEPEAVRTED) the composition is skewed to basic and acidic residues.

In terms of biological role, appears to contribute to D.radiodurans capacity to survive exposure to ionizing radiation. May play a role in DNA repair and genome reconstitution. The sequence is that of DNA damage response protein D (ddrD) from Deinococcus radiodurans (strain ATCC 13939 / DSM 20539 / JCM 16871 / CCUG 27074 / LMG 4051 / NBRC 15346 / NCIMB 9279 / VKM B-1422 / R1).